The chain runs to 377 residues: Membrane progestin receptor epsilon (377 aa).

The disordered stretch occupies residues 1 to 40 (MPRRLQPRGAGTKGPPAPAPAASGAARNSHSAASRDPPAS). Topologically, residues 1 to 86 (MPRRLQPRGA…VLKPTNETLN (86 aa)) are cytoplasmic. Residues 9–26 (GAGTKGPPAPAPAASGAA) show a composition bias toward low complexity. The helical transmembrane segment at 87–107 (FWTHFIPLLLFLSKFCRLFFL) threads the bilayer. The Extracellular portion of the chain corresponds to 108–116 (SGGDVPFHH). A helical membrane pass occupies residues 117-137 (PWLLPLWCYASGVLLTFAMSC). Topologically, residues 138 to 162 (TAHVFSCLSLRLRAAFFYLDYASIS) are cytoplasmic. Residues 163–183 (YYGFGSTVAYYYYLLPGLSLL) form a helical membrane-spanning segment. At 184–205 (DARVMTPYLQQRLGWHVDCTRL) the chain is on the extracellular side. A helical transmembrane segment spans residues 206–226 (IAAYRALVLPVAFVLAVACTV). The Cytoplasmic portion of the chain corresponds to 227–243 (ACCKSRTDWCTYPFALR). The chain crosses the membrane as a helical span at residues 244–264 (TFVFVMPLSMACPIMLESWLF). Topologically, residues 265-301 (DLRGENPTLFVHFYRRYFWLVVAAFFNVSKIPERIQP) are extracellular. The chain crosses the membrane as a helical span at residues 302–322 (GLFDIIGHSHQLFHIFTFLSI). At 323 to 343 (YDQVYYVEEGLRQFLQAPPAA) the chain is on the cytoplasmic side. Residues 344 to 364 (PTFSGTVGYMLLLVVCLGLVI) form a helical membrane-spanning segment. Over 365–377 (RKFLNSSEFCSKK) the chain is Extracellular.

The protein belongs to the ADIPOR family. Homodimer. Expression levels vary widely in a range of tissues. Expressed in the brain, at high level in the pituitary gland and also in hypothalamus, limbic system, caudate nucleus accumens, pons and olfactory bulb.

The protein resides in the cell membrane. Its function is as follows. Plasma membrane progesterone (P4) receptor coupled to G proteins. Seems to act through a G(s) mediated pathway. May be involved in regulating rapid P4 signaling in the nervous system. Also binds dehydroepiandrosterone (DHEA), pregnanolone, pregnenolone and allopregnanolone. The sequence is that of Membrane progestin receptor epsilon from Homo sapiens (Human).